The chain runs to 121 residues: Ribosome-binding factor A (121 aa).

The protein belongs to the RbfA family. In terms of assembly, monomer. Binds 30S ribosomal subunits, but not 50S ribosomal subunits or 70S ribosomes.

Its subcellular location is the cytoplasm. One of several proteins that assist in the late maturation steps of the functional core of the 30S ribosomal subunit. Associates with free 30S ribosomal subunits (but not with 30S subunits that are part of 70S ribosomes or polysomes). Required for efficient processing of 16S rRNA. May interact with the 5'-terminal helix region of 16S rRNA. The protein is Ribosome-binding factor A of Clostridium kluyveri (strain NBRC 12016).